Here is a 533-residue protein sequence, read N- to C-terminus: uncharacterized protein (533 aa).

The next 5 membrane-spanning stretches (helical) occupy residues 4–23, 28–47, 57–79, 86–108, and 151–173; these read FLAA…GLAI, VFGL…VVST, IVYQ…PAFF, GWKL…WVLI, and VIGY…AVGA. The RCK C-terminal domain occupies 263–347; sequence LGEERETKIE…VAEVRRFLGD (85 aa). The next 4 membrane-spanning stretches (helical) occupy residues 352 to 374, 379 to 401, 422 to 444, and 454 to 476; these read LADV…GAIP, GGTT…LGAL, LGLA…AALT, and GGLV…VLRL.

The protein belongs to the AAE transporter (TC 2.A.81) family.

It localises to the cell membrane. This is an uncharacterized protein from Corynebacterium glutamicum (strain ATCC 13032 / DSM 20300 / JCM 1318 / BCRC 11384 / CCUG 27702 / LMG 3730 / NBRC 12168 / NCIMB 10025 / NRRL B-2784 / 534).